The primary structure comprises 308 residues: MVFKMSEMDIIKETYEKIKNMEIRGAGRIGRAAAKALKEYALKISHLNEEEFKNKMREAGNILISARPTAVSLPNVVKYVLKGLNEENPKERVIERADEFINSSLKAIENIGKFGANRIKDGDTILTHCNSEAAISVIKTAYDEGKDIKVFCTETRPRNQGYLTAKTLYDYGIDVTLIVDSAVRYFIKEIDIVVVGADAITANGCLVNKIGTSQIALIANESRVPFLTAAETYKFHPKTIVGELIEIEERSPEEVAVFEDKYKGIKIRNPAFDVTPAKYIDAIITEVGLIPPQGAWYIIEKYFGWLEK.

Substrate contacts are provided by residues 24–27 (RGAG) and arginine 67. Residue cysteine 129 is the Proton acceptor of the active site. The Proton donor role is filled by aspartate 198. Substrate is bound by residues 208 to 209 (NK) and lysine 234.

Belongs to the eIF-2B alpha/beta/delta subunits family. R15P isomerase subfamily.

The enzyme catalyses alpha-D-ribose 1,5-bisphosphate = D-ribulose 1,5-bisphosphate. Catalyzes the isomerization of ribose 1,5-bisphosphate (R15P) to ribulose 1,5-bisphosphate (RuBP), the CO(2) acceptor and substrate for RubisCO. Functions in an archaeal AMP degradation pathway, together with AMP phosphorylase and RubisCO. This Methanocaldococcus jannaschii (strain ATCC 43067 / DSM 2661 / JAL-1 / JCM 10045 / NBRC 100440) (Methanococcus jannaschii) protein is Ribose 1,5-bisphosphate isomerase.